Here is a 258-residue protein sequence, read N- to C-terminus: 4,5-dihydroxyphthalate decarboxylase (258 aa).

This sequence to P.testosteroni DHP decarboxylase.

It carries out the reaction 4,5-dihydroxyphthalate + H(+) = 3,4-dihydroxybenzoate + CO2. It participates in xenobiotic degradation; phthalate degradation; 3,4-dihydroxybenzoate from phthalate: step 3/3. In Pseudomonas putida (Arthrobacter siderocapsulatus), this protein is 4,5-dihydroxyphthalate decarboxylase (pht5).